Here is a 300-residue protein sequence, read N- to C-terminus: Protoheme IX farnesyltransferase 1 (300 aa).

Transmembrane regions (helical) follow at residues 28–48, 50–70, 106–126, 150–170, 176–196, 222–242, 243–263, and 280–300; these read VVAL…PGAV, VQPL…AAAY, AMAI…TAWL, IVVG…AITG, ALLL…ALAI, CIML…LVGM, CGPL…YKAW, and FSIY…YLWS.

It belongs to the UbiA prenyltransferase family. Protoheme IX farnesyltransferase subfamily.

The protein localises to the cell inner membrane. The enzyme catalyses heme b + (2E,6E)-farnesyl diphosphate + H2O = Fe(II)-heme o + diphosphate. It functions in the pathway porphyrin-containing compound metabolism; heme O biosynthesis; heme O from protoheme: step 1/1. In terms of biological role, converts heme B (protoheme IX) to heme O by substitution of the vinyl group on carbon 2 of heme B porphyrin ring with a hydroxyethyl farnesyl side group. The chain is Protoheme IX farnesyltransferase 1 from Shewanella loihica (strain ATCC BAA-1088 / PV-4).